A 474-amino-acid polypeptide reads, in one-letter code: MSKTYVGSRVRQLRNERGFSQAALAQMLEISPSYLNQIEHDVRPLTVAVLLRITEVFGVDATFFASQDDTRLVAELREVTLDRDLDIAIDPHEVAEMVSAHPGLACAVVNLHRRYRITTAQLAAATEERFSDGSGRGSITMPHEEVRDYFYQRQNYLHALDTAAEDLTAQMRMHHGDLARELTRRLTEVHGVRINKRIDLGDTVLHRYDPATNTLEISSHLSPGQQVFKMAAELAYLEFGDLIDAMVTDGKFTSAESRTLARLGLANYFAAATVLPYRQFHDVAENFRYDVERLSAFYSVSYETIAHRLSTLQRPSMRGVPFTFVRVDRAGNMSKRQSATGFHFSSSGGTCPLWNVYETFANPGKILVQIAQMPDGRNYLWVARTVELRAARYGQPGKTFAIGLGCELRHAHRLVYSEGLDLSGDPNTAATPIGAGCRVCERDNCPQRAFPALGRALDLDEHRSTVSPYLVKQL.

The region spanning 10–64 is the HTH cro/C1-type domain; it reads VRQLRNERGFSQAALAQMLEISPSYLNQIEHDVRPLTVAVLLRITEVFGVDATFF. The segment at residues 21 to 40 is a DNA-binding region (H-T-H motif); that stretch reads QAALAQMLEISPSYLNQIEH.

It belongs to the short-chain fatty acyl-CoA assimilation regulator (ScfR) family.

Involved in the control of the glyoxylate cycle. RamB negatively controls the expression of icl expression during growth on acetate as the sole carbon source. The protein is HTH-type transcriptional regulator RamB of Mycobacterium tuberculosis (strain CDC 1551 / Oshkosh).